The following is a 145-amino-acid chain: D-aminoacyl-tRNA deacylase (145 aa).

Residues 137–138 (GP) carry the Gly-cisPro motif, important for rejection of L-amino acids motif.

The protein belongs to the DTD family. Homodimer.

The protein resides in the cytoplasm. The enzyme catalyses glycyl-tRNA(Ala) + H2O = tRNA(Ala) + glycine + H(+). It catalyses the reaction a D-aminoacyl-tRNA + H2O = a tRNA + a D-alpha-amino acid + H(+). In terms of biological role, an aminoacyl-tRNA editing enzyme that deacylates mischarged D-aminoacyl-tRNAs. Also deacylates mischarged glycyl-tRNA(Ala), protecting cells against glycine mischarging by AlaRS. Acts via tRNA-based rather than protein-based catalysis; rejects L-amino acids rather than detecting D-amino acids in the active site. By recycling D-aminoacyl-tRNA to D-amino acids and free tRNA molecules, this enzyme counteracts the toxicity associated with the formation of D-aminoacyl-tRNA entities in vivo and helps enforce protein L-homochirality. The chain is D-aminoacyl-tRNA deacylase from Shewanella baltica (strain OS223).